A 274-amino-acid polypeptide reads, in one-letter code: Ribosomal RNA small subunit methyltransferase A (274 aa).

Residues Asn28, Leu30, Gly55, Glu77, Asp103, and Asn122 each coordinate S-adenosyl-L-methionine.

It belongs to the class I-like SAM-binding methyltransferase superfamily. rRNA adenine N(6)-methyltransferase family. RsmA subfamily.

Its subcellular location is the cytoplasm. The catalysed reaction is adenosine(1518)/adenosine(1519) in 16S rRNA + 4 S-adenosyl-L-methionine = N(6)-dimethyladenosine(1518)/N(6)-dimethyladenosine(1519) in 16S rRNA + 4 S-adenosyl-L-homocysteine + 4 H(+). Specifically dimethylates two adjacent adenosines (A1518 and A1519) in the loop of a conserved hairpin near the 3'-end of 16S rRNA in the 30S particle. May play a critical role in biogenesis of 30S subunits. This chain is Ribosomal RNA small subunit methyltransferase A, found in Sinorhizobium medicae (strain WSM419) (Ensifer medicae).